Reading from the N-terminus, the 337-residue chain is uncharacterized protein (337 aa).

Residues 248–276 (NELKAETTIQVLREQLRQEKKLKEQVLSL) adopt a coiled-coil conformation. The tract at residues 285–337 (GGRGEEFGKPDETPSSASVGDDNFPSSTNHTFEARRRPSSLSSGGALKPSKIL) is disordered. Over residues 287 to 296 (RGEEFGKPDE) the composition is skewed to basic and acidic residues. Residues 297-315 (TPSSASVGDDNFPSSTNHT) show a composition bias toward polar residues.

This is an uncharacterized protein from Invertebrate iridescent virus 3 (IIV-3).